Reading from the N-terminus, the 241-residue chain is MSASLVNRSLKNIRNELEFLKESNVISGDIFELINSKLPEKWDGNQRSPQNADTEEYVEALYDFEAQQDGDLSLKTGDKIQVLEKISPDWYRGKSNNKIGIFPANYVKPAFTRSASPKSAEAASSSTVSRPSVPPPSYEPAASQYPSQQVSAPYAPPAGYMQAPPPQQQQAPLPYPPPFTNYYQQPQQQYAPPSQQAPVEAQPQQSSGASSAFKSFGSKLGNAAIFGAGSAIGSDIVNSIF.

Residue S2 is modified to N-acetylserine. K41 is covalently cross-linked (Glycyl lysine isopeptide (Lys-Gly) (interchain with G-Cter in ubiquitin)). S48 carries the post-translational modification Phosphoserine. Residues 53–112 form the SH3 domain; that stretch reads DTEEYVEALYDFEAQQDGDLSLKTGDKIQVLEKISPDWYRGKSNNKIGIFPANYVKPAFT. A Glycyl lysine isopeptide (Lys-Gly) (interchain with G-Cter in ubiquitin) cross-link involves residue K79. A phosphoserine mark is found at S114 and S116. K118 is covalently cross-linked (Glycyl lysine isopeptide (Lys-Gly) (interchain with G-Cter in ubiquitin)). Residues 118-131 show a composition bias toward low complexity; sequence KSAEAASSSTVSRP. The tract at residues 118–213 is disordered; sequence KSAEAASSST…QQSSGASSAF (96 aa). The PY motif signature appears at 135–138; the sequence is PPSY. Residues 163 to 179 show a composition bias toward pro residues; it reads APPPQQQQAPLPYPPPF. Low complexity predominate over residues 180-213; sequence TNYYQQPQQQYAPPSQQAPVEAQPQQSSGASSAF. A Glycyl lysine isopeptide (Lys-Gly) (interchain with G-Cter in ubiquitin) cross-link involves residue K219.

Belongs to the LSB1 family. Interacts with LAS17, RSP5 and SUP35. Post-translationally, ubiquitinated by RSP5.

It is found in the cytoplasm. The protein resides in the nucleus. Its subcellular location is the cytoskeleton. The protein localises to the actin patch. Functionally, involved in resistance to EDTA. In Saccharomyces cerevisiae (strain ATCC 204508 / S288c) (Baker's yeast), this protein is LAS seventeen-binding protein 1 (LSB1).